Reading from the N-terminus, the 339-residue chain is Heat-inducible transcription repressor HrcA (339 aa).

It belongs to the HrcA family.

Functionally, negative regulator of class I heat shock genes (grpE-dnaK-dnaJ and groELS operons). Prevents heat-shock induction of these operons. This chain is Heat-inducible transcription repressor HrcA, found in Clostridioides difficile (strain 630) (Peptoclostridium difficile).